A 93-amino-acid polypeptide reads, in one-letter code: Transcription factor RADIALIS (93 aa).

Residues 6 to 61 (GSGRPWSAKENKAFERALAVYDKDTPDRWANVARAVEGRTPEEVKKHYEILVEDIK) form the SANT domain.

As to expression, specifically expressed in the dorsal region of developing flowers.

Its subcellular location is the nucleus. Its function is as follows. Involved in the dorsovental asymmetry of flowers. Promotes dorsal identity. The chain is Transcription factor RADIALIS (RAD) from Antirrhinum majus (Garden snapdragon).